A 361-amino-acid polypeptide reads, in one-letter code: RuBisCO accumulation factor 1 (361 aa).

Residues 16 to 197 (NELAQELLRK…RKQIEQLLVD (182 aa)) are N-terminal alpha-helix. A C-terminal beta-sheet region spans residues 221–347 (PRIVPVVGQL…VIILVRPRRI (127 aa)).

The protein belongs to the RAF family. As to quaternary structure, homodimer. Forms an RbcL(8)-Raf1(8) complex. Each Raf1 dimer clamps the exterior of an RbcL dimer, protecting it. The extreme C-terminus (residues 354-361) inserts into the catalytic pocket of RbcL where the Glu-361 forms a salt bridge with 'Lys-202'. This insertion probably contributes to the assembly of RbcL(8). Forms complexes of many stoichiometries with RbcL with and without RbcS. RbcX and Raf1 can bind simultaneously to RbcL.

Its subcellular location is the cytoplasm. A major RuBisCO chaperone. Acts after GroEL-GroES chaperonin to fold and/or assemble the large subunit of RuBisCO (ccbL, rbcL). Cooperates with RbcX in RbcL folding, plays the major role in assembly of dimers into RbcL(8)-Raf1(8) intermediate complexes. RbcS replaces Raf1, leading to holoenzyme formation. Functionally, in vitro acts as an antagonist to CcmM35, suggesting it might regulate RuBisCO condensation and decondensation. This Nostoc sp. (strain PCC 7120 / SAG 25.82 / UTEX 2576) protein is RuBisCO accumulation factor 1.